The following is a 221-amino-acid chain: Zingipain-1 (221 aa).

3 disulfides stabilise this stretch: Cys24–Cys65, Cys58–Cys98, and Cys155–Cys206. Residue Cys27 is part of the active site. N-linked (GlcNAc...) asparagine glycosylation is found at Asn95 and Asn156. Residues His161 and Asn181 contribute to the active site.

The protein belongs to the peptidase C1 family.

The catalysed reaction is Preferential cleavage of peptides with a proline residue at the P2 position.. Cysteine proteinase with a high level of diversity in substrate specificity, an amino acid bearing a proline residue at the P2 position is preferred. In Zingiber officinale (Ginger), this protein is Zingipain-1.